The chain runs to 451 residues: Tubby-like F-box protein 12 (451 aa).

The F-box domain occupies 57-112; that stretch reads SRWVGLPPELLRDVMKRLEEGESNWPSRKDVVACAAVCRTWREICKDIVQSPEICG. The segment covering 387 to 406 has biased composition (low complexity); the sequence is LEQQQQQQQQNHASSSSSAS. The tract at residues 387–407 is disordered; that stretch reads LEQQQQQQQQNHASSSSSASD.

The protein belongs to the TUB family. Ubiquitous.

In Oryza sativa subsp. japonica (Rice), this protein is Tubby-like F-box protein 12 (TULP12).